We begin with the raw amino-acid sequence, 609 residues long: Glutamine--fructose-6-phosphate aminotransferase [isomerizing] (609 aa).

The active-site Nucleophile; for GATase activity is Cys-2. The Glutamine amidotransferase type-2 domain maps to 2 to 219 (CGIVAAVTQR…EGDIAIVARK (218 aa)). SIS domains lie at 288–428 (ENNI…SKKE) and 460–599 (MANT…IDQP). The active-site For Fru-6P isomerization activity is Lys-604.

Homodimer.

The protein localises to the cytoplasm. The catalysed reaction is D-fructose 6-phosphate + L-glutamine = D-glucosamine 6-phosphate + L-glutamate. Functionally, catalyzes the first step in hexosamine metabolism, converting fructose-6P into glucosamine-6P using glutamine as a nitrogen source. This is Glutamine--fructose-6-phosphate aminotransferase [isomerizing] from Buchnera aphidicola subsp. Acyrthosiphon pisum (strain APS) (Acyrthosiphon pisum symbiotic bacterium).